The following is a 684-amino-acid chain: DNA ligase (684 aa).

Residues 34–38 (DFQYD), 83–84 (SL), and Glu117 contribute to the NAD(+) site. The active-site N6-AMP-lysine intermediate is Lys119. Residues Arg140, Glu186, Lys300, and Lys324 each contribute to the NAD(+) site. 4 residues coordinate Zn(2+): Cys418, Cys421, Cys436, and Cys442. The BRCT domain maps to 601-684 (PVNLNFDGMK…EMLGEVGSNE (84 aa)).

It belongs to the NAD-dependent DNA ligase family. LigA subfamily. Requires Mg(2+) as cofactor. Mn(2+) serves as cofactor.

The catalysed reaction is NAD(+) + (deoxyribonucleotide)n-3'-hydroxyl + 5'-phospho-(deoxyribonucleotide)m = (deoxyribonucleotide)n+m + AMP + beta-nicotinamide D-nucleotide.. In terms of biological role, DNA ligase that catalyzes the formation of phosphodiester linkages between 5'-phosphoryl and 3'-hydroxyl groups in double-stranded DNA using NAD as a coenzyme and as the energy source for the reaction. It is essential for DNA replication and repair of damaged DNA. The chain is DNA ligase from Chlorobium phaeobacteroides (strain BS1).